A 156-amino-acid polypeptide reads, in one-letter code: Small ribosomal subunit protein uS7 (156 aa).

The protein belongs to the universal ribosomal protein uS7 family. Part of the 30S ribosomal subunit. Contacts proteins S9 and S11.

Functionally, one of the primary rRNA binding proteins, it binds directly to 16S rRNA where it nucleates assembly of the head domain of the 30S subunit. Is located at the subunit interface close to the decoding center, probably blocks exit of the E-site tRNA. The chain is Small ribosomal subunit protein uS7 from Lactobacillus delbrueckii subsp. bulgaricus (strain ATCC 11842 / DSM 20081 / BCRC 10696 / JCM 1002 / NBRC 13953 / NCIMB 11778 / NCTC 12712 / WDCM 00102 / Lb 14).